Consider the following 107-residue polypeptide: Frataxin (107 aa).

This sequence belongs to the frataxin family. In terms of assembly, monomer.

The protein localises to the cytoplasm. In terms of biological role, promotes the assembly and repair of iron-sulfur clusters by delivering Fe(2+) to proteins involved in these pathways. The protein is Frataxin (YFH1) of Trachipleistophora hominis (Microsporidian parasite).